Here is a 196-residue protein sequence, read N- to C-terminus: Probable GTP-binding protein EngB (196 aa).

The EngB-type G domain occupies 22–195 (KLPEVALAGR…WNWIESITKV (174 aa)). GTP contacts are provided by residues 30-37 (GRSNVGKS), 57-61 (GKTQT), 75-78 (DVPG), 142-145 (TKID), and 174-176 (FSA). Residues S37 and T59 each coordinate Mg(2+).

This sequence belongs to the TRAFAC class TrmE-Era-EngA-EngB-Septin-like GTPase superfamily. EngB GTPase family. The cofactor is Mg(2+).

In terms of biological role, necessary for normal cell division and for the maintenance of normal septation. This Ligilactobacillus salivarius (strain UCC118) (Lactobacillus salivarius) protein is Probable GTP-binding protein EngB.